Here is a 63-residue protein sequence, read N- to C-terminus: Large ribosomal subunit protein eL29 (63 aa).

Over residues 1–26 the composition is skewed to basic residues; it reads MAKSKNHTAHNQTRKAHRNGIKKPKT. The tract at residues 1-35 is disordered; sequence MAKSKNHTAHNQTRKAHRNGIKKPKTYKYPSLKGV.

This sequence belongs to the eukaryotic ribosomal protein eL29 family. As to quaternary structure, component of the large ribosomal subunit. Mature ribosomes consist of a small (40S) and a large (60S) subunit. The 40S subunit contains about 32 different proteins and 1 molecule of RNA (18S). The 60S subunit contains 45 different proteins and 3 molecules of RNA (25S, 5.8S and 5S).

The protein localises to the cytoplasm. Component of the ribosome, a large ribonucleoprotein complex responsible for the synthesis of proteins in the cell. The small ribosomal subunit (SSU) binds messenger RNAs (mRNAs) and translates the encoded message by selecting cognate aminoacyl-transfer RNA (tRNA) molecules. The large subunit (LSU) contains the ribosomal catalytic site termed the peptidyl transferase center (PTC), which catalyzes the formation of peptide bonds, thereby polymerizing the amino acids delivered by tRNAs into a polypeptide chain. The nascent polypeptides leave the ribosome through a tunnel in the LSU and interact with protein factors that function in enzymatic processing, targeting, and the membrane insertion of nascent chains at the exit of the ribosomal tunnel. This chain is Large ribosomal subunit protein eL29, found in Candida albicans (strain SC5314 / ATCC MYA-2876) (Yeast).